The primary structure comprises 215 residues: Small ribosomal subunit protein bS6 (215 aa).

Disordered regions lie at residues 121–153 (RENN…QKPK) and 187–215 (NQRQ…KDKQ). Residues 144–153 (SRTEKAQKPK) show a composition bias toward basic and acidic residues. A compositionally biased stretch (low complexity) spans 188–198 (QRQNQQNNNNN). Over residues 199-215 (RFDRNRNRQHNRFKDKQ) the composition is skewed to basic and acidic residues.

Belongs to the bacterial ribosomal protein bS6 family.

In terms of biological role, binds together with bS18 to 16S ribosomal RNA. This Mycoplasma pneumoniae (strain ATCC 29342 / M129 / Subtype 1) (Mycoplasmoides pneumoniae) protein is Small ribosomal subunit protein bS6 (rpsF).